The primary structure comprises 130 residues: Glycine cleavage system H protein (130 aa).

Positions 24-106 constitute a Lipoyl-binding domain; the sequence is IYSVGITEHA…YTDGWLFRIK (83 aa). Lys-65 bears the N6-lipoyllysine mark.

Belongs to the GcvH family. The glycine cleavage system is composed of four proteins: P, T, L and H. (R)-lipoate is required as a cofactor.

In terms of biological role, the glycine cleavage system catalyzes the degradation of glycine. The H protein shuttles the methylamine group of glycine from the P protein to the T protein. This chain is Glycine cleavage system H protein, found in Pectobacterium atrosepticum (strain SCRI 1043 / ATCC BAA-672) (Erwinia carotovora subsp. atroseptica).